The primary structure comprises 146 residues: Large ribosomal subunit protein uL15 (146 aa).

Over residues 1–13 (MKLHELKPAEGSR) the composition is skewed to basic and acidic residues. The interval 1–57 (MKLHELKPAEGSRKVRNRVGRGTSSGNGKTSGRGQKGQKARSGVGLRPGFEGGQTPL) is disordered. The span at 23–35 (TSSGNGKTSGRGQ) shows a compositional bias: gly residues.

Belongs to the universal ribosomal protein uL15 family. Part of the 50S ribosomal subunit.

Its function is as follows. Binds to the 23S rRNA. This Streptococcus thermophilus (strain ATCC BAA-491 / LMD-9) protein is Large ribosomal subunit protein uL15.